We begin with the raw amino-acid sequence, 88 residues long: Large ribosomal subunit protein bL27 (88 aa).

Residues 1–26 (MAHKKGASSSSNGRDSEAKRLGVKRF) form a disordered region.

The protein belongs to the bacterial ribosomal protein bL27 family.

The chain is Large ribosomal subunit protein bL27 from Corynebacterium glutamicum (strain R).